A 518-amino-acid chain; its full sequence is Probable alginate O-acetylase AlgI (518 aa).

8 consecutive transmembrane segments (helical) span residues 2–24 (VFSSNVFLFMFLPIFLGLYYLSG), 39–61 (FYAWWRVDFLALFIGVTVWNYWI), 78–100 (WLLLGVIVDLCILGYFKYANFGV), 115–137 (FILTHVLLPIGISFYVFESISYI), 150–172 (NLIDFAAFVAIFPHLIAGPVLRF), 319–341 (GLWHGANVTYIIWGAWHGMWLAI), 354–373 (FNVIRWALTFLLVVIGWVIF), and 402–424 (ASLTGLQVATLVVAYATLAFFGL). H322 is an active-site residue. Residues 435–456 (SGKSARADGPATEQPGTIKAVP) form a disordered region. The helical transmembrane segment at 493-515 (LILLLFVASILKLSAQSFSPFLY) threads the bilayer.

Belongs to the membrane-bound acyltransferase family.

The protein resides in the cell inner membrane. It participates in glycan biosynthesis; alginate biosynthesis. Functionally, together with AlgJ and AlgF, forms an inner membrane complex which probably interacts with the alginate polymerization-transport complex and adds acetyl groups at the O-2 and O-3 positions of mannuronate residues. Acetylation of alginate is important for the architecture of biofilms and increases the ability of alginate to act as a defense barrier. This is Probable alginate O-acetylase AlgI (algI) from Pseudomonas syringae pv. tomato (strain ATCC BAA-871 / DC3000).